A 343-amino-acid chain; its full sequence is Probable fructokinase-7 (343 aa).

N-acetylglycine is present on Gly-2.

Belongs to the carbohydrate kinase PfkB family.

The enzyme catalyses D-fructose + ATP = D-fructose 6-phosphate + ADP + H(+). It functions in the pathway glycan biosynthesis; starch biosynthesis. Its function is as follows. May play an important role in maintaining the flux of carbon towards starch formation. This chain is Probable fructokinase-7, found in Arabidopsis thaliana (Mouse-ear cress).